A 442-amino-acid chain; its full sequence is C4-dicarboxylate transport protein 2 (442 aa).

The next 9 helical transmembrane spans lie at 20 to 39 (QLYV…GHYY), 52 to 74 (AFIK…TGIA), 89 to 111 (AMLY…ANVV), 141 to 158 (VTGF…GAFA), 162 to 179 (ILQV…LALV), 200 to 221 (LVSV…FTIG), 231 to 253 (LAML…LGAV), 342 to 364 (ILLL…AGFI), and 368 to 387 (ATLS…ILGV).

This sequence belongs to the dicarboxylate/amino acid:cation symporter (DAACS) (TC 2.A.23) family.

Its subcellular location is the cell inner membrane. Its function is as follows. Responsible for the transport of dicarboxylates such as succinate, fumarate, and malate from the periplasm across the membrane. This transport system plays an important role in the energy supply of rhizobium-legume symbionts. This is C4-dicarboxylate transport protein 2 (dctA2) from Mesorhizobium japonicum (strain LMG 29417 / CECT 9101 / MAFF 303099) (Mesorhizobium loti (strain MAFF 303099)).